A 139-amino-acid polypeptide reads, in one-letter code: Putative translationally-controlled tumor protein-like protein TPT1P8 (139 aa).

The 139-residue stretch at 1–139 (MIIFQDLISH…KTTSSLLVKT (139 aa)) folds into the TCTP domain. The span at 40-51 (TGNTDDSLIGRN) shows a compositional bias: polar residues. A disordered region spans residues 40-60 (TGNTDDSLIGRNSSSESTEDE).

The protein belongs to the TCTP family.

The sequence is that of Putative translationally-controlled tumor protein-like protein TPT1P8 (TPT1P8) from Homo sapiens (Human).